Here is a 195-residue protein sequence, read N- to C-terminus: Erythropoietin (195 aa).

The first 28 residues, 1–28, serve as a signal peptide directing secretion; sequence MGVRGRLALLPLALLCLLVLALGLPVLG. 2 disulfides stabilise this stretch: C35–C190 and C57–C61. N52 is a glycosylation site (N-linked (GlcNAc...) asparagine). 2 N-linked (GlcNAc...) asparagine glycosylation sites follow: N66 and N111.

It belongs to the EPO/TPO family.

It is found in the secreted. Hormone involved in the regulation of erythrocyte proliferation and differentiation and the maintenance of a physiological level of circulating erythrocyte mass. Binds to EPOR leading to EPOR dimerization and JAK2 activation thereby activating specific downstream effectors, including STAT1 and STAT3. In Oryctolagus cuniculus (Rabbit), this protein is Erythropoietin (EPO).